The chain runs to 104 residues: Gastrin (104 aa).

Positions 1 to 21 (MQRLCVYVLILALALATFSEA) are cleaved as a signal peptide. Residues 22-58 (SWKPRSRLQDAPSGPGANRGLEPHGLDQLGPASHHRR) constitute a propeptide that is removed on maturation. Residues 22-70 (SWKPRSRLQDAPSGPGANRGLEPHGLDQLGPASHHRRQLGLQGPPQLVA) form a disordered region. 2 positions are modified to pyrrolidone carboxylic acid: Gln-59 and Gln-76. Position 87 is a sulfotyrosine (Tyr-87). At Phe-92 the chain carries Phenylalanine amide. Phosphoserine is present on Ser-96. The propeptide occupies 96–104 (SAEEGDQRP).

Belongs to the gastrin/cholecystokinin family.

The protein localises to the secreted. Functionally, gastrin stimulates the stomach mucosa to produce and secrete hydrochloric acid and the pancreas to secrete its digestive enzymes. It also stimulates smooth muscle contraction and increases blood circulation and water secretion in the stomach and intestine. In Canis lupus familiaris (Dog), this protein is Gastrin (GAST).